Reading from the N-terminus, the 116-residue chain is Non-specific lipid-transfer protein D, cotyledon-specific isoform (116 aa).

The signal sequence occupies residues 1-24 (MKNIFFSVFFLLSFLLCLANVSEA). 4 disulfide bridges follow: Cys28–Cys76, Cys38–Cys53, Cys54–Cys98, and Cys74–Cys112.

The protein belongs to the plant LTP family.

Functionally, plant non-specific lipid-transfer proteins transfer phospholipids as well as galactolipids across membranes. May play a role in wax or cutin deposition in the cell walls of expanding epidermal cells and certain secretory tissues. The chain is Non-specific lipid-transfer protein D, cotyledon-specific isoform from Ricinus communis (Castor bean).